The primary structure comprises 1840 residues: Neurexin 1 (1840 aa).

Residues 1–50 (MKAPHSATYQDNYADAAMTARTRPSMDMDQQRNRNQAELRLLPAQRTSTS) are disordered. The Extracellular portion of the chain corresponds to 1–1696 (MKAPHSATYQ…NSIEEERTAM (1696 aa)). The span at 24–37 (PSMDMDQQRNRNQA) shows a compositional bias: basic and acidic residues. The 186-residue stretch at 104–289 (GFQLDGSQNS…RDIKCGDVPC (186 aa)) folds into the Laminin G-like 1 domain. One can recognise an EGF-like 1 domain in the interval 309 to 347 (TTDACERNDPCQHGGICISTDSGPICECRNLEYDGQYCE). 8 disulfides stabilise this stretch: C313–C325, C319–C334, C336–C346, C511–C547, C710–C739, C746–C757, C751–C766, and C768–C778. 2 consecutive Laminin G-like domains span residues 352–547 (PSEA…EYQC) and 554–739 (DPVT…KPSC). The EGF-like 2 domain occupies 742 to 779 (QANVCNGNPCLNGGTCLEGWNRPICDCSATLYGGPTCG). 2 Laminin G-like domains span residues 784–964 (TLAF…LPSA) and 982–1158 (HAAT…VSGC). 4 disulfides stabilise this stretch: C1130/C1158, C1164/C1175, C1169/C1184, and C1186/C1196. In terms of domain architecture, EGF-like 3 spans 1160-1197 (GPTKCSQNACANRGNCVQQWNAYACECDMTSYTGPTCY). One can recognise a Laminin G-like 6 domain in the interval 1201–1416 (IAYEFGNNKG…LIFSGAGSGC (216 aa)). The segment at 1411–1651 (GAGSGCRGDD…DEHHPLPPLP (241 aa)) is disordered. The span at 1447 to 1472 (QTTTSQQGNSLSTGGSSSGGVITNGT) shows a compositional bias: low complexity. Residues 1491–1527 (TTEQFTSTSTARGSESNNEMVTITTTGRSDVTTEQHQ) show a composition bias toward polar residues. The segment covering 1528–1600 (GSSSSSSSGS…TTTTTTTTQA (73 aa)) has biased composition (low complexity). The segment covering 1632 to 1646 (RNDHDRMQLPDEHHP) has biased composition (basic and acidic residues). Residues 1697–1717 (IIGIVAGILIAVVLVILLVLW) traverse the membrane as a helical segment. Residues 1718-1840 (LKSNGDRGYK…DSKDVKEWYV (123 aa)) are Cytoplasmic-facing. The disordered stretch occupies residues 1737–1840 (GSHNPNAALL…DSKDVKEWYV (104 aa)). Polar residues predominate over residues 1747–1757 (GNTSTNGSYHQ). The segment covering 1774–1787 (QQQHHAQQQMHNGH) has biased composition (low complexity). Residues 1788-1813 (NGNGNGGGGGGGGMMSSGSGSLGYGS) show a composition bias toward gly residues. Zn(2+) is bound by residues D1831 and D1834. Positions 1831–1840 (DSKDVKEWYV) are enriched in basic and acidic residues. Residues 1837 to 1840 (EWYV) carry the PDZ domain binding motif.

Belongs to the neurexin family. As to quaternary structure, interacts (via C-terminal PDZ binding motif) with CASK (via PDZ domain). Interacts (via cytoplasmic domain) with apolpp/ApoLI; the interaction supports apolpp/ApoLI protein stability. Interact (via cytoplasmic domain) with Spn/Spinophilin. Interacts with RhoGAP100F/Syd-1 (via PDZ domain); RhoGAP100F/Syd-1 may recruit Nrx-1 to the presynaptic active zone. In terms of tissue distribution, expressed in brain, with expression in medulla, lamina, lobula, lobula plate, mushroom body and antennal lobe, and in retina (at protein level). Expressed in rabdomere of photoreceptor cells (at protein level).

It localises to the synaptic cell membrane. It is found in the presynaptic cell membrane. The protein localises to the postsynaptic cell membrane. In terms of biological role, neuronal cell adhesion protein involved in synapse formation, development of synaptic active zones, synaptic regulation and visual function. Plays a role in cell adhesion between the pre- and the postsynaptic cell. Required for proper proliferation of synaptic boutons during larval development, a process necessary for coordinated matching of pre-and postsynaptic compartments. Promotes presynaptic active zone formation and neurotransmitter release. Spn/Spinophilin fine-tunes nrx-1/nlg1 signaling at the pre-synapse to control active zone number and functionality and thereby optimizing action potential-induced exocytosis. Required for synapse formation in central nervous system. By regulating synapse formation, may play a role in larval associative learning. Together with RhoGAP100F/syd-1, controls synapse formation at the neuromuscular junction. Essential for synaptic vesicle cycling, which plays critical roles in neurotransmission at neuromuscular junctions (NMJ). Regulated and restricts formation of glutamate receptor clusters. Mediates retinoid transport and subsequent rhodopsin maturation and may regulate lipoprotein function; thereby playing a role in vision. Regulates sleep, circadian rhythm and synaptic plasticity. Together with CASK, required for locomotion. The polypeptide is Neurexin 1 (Drosophila melanogaster (Fruit fly)).